Reading from the N-terminus, the 528-residue chain is Keratin, type II cytoskeletal 78 (528 aa).

The segment at 1–104 is head; the sequence is MSLSPCRARR…DPQFQVVRTQ (104 aa). The disordered stretch occupies residues 23–45; that stretch reads VGRGRTGFSSRSLSSFGGCRGGS. Positions 24-39 are enriched in low complexity; it reads GRGRTGFSSRSLSSFG. The interval 105–140 is coil 1A; the sequence is ETQQIRVLNNQFASFIDKVRFLEQQNKVLETKWHLL. The region spanning 105–418 is the IF rod domain; that stretch reads ETQQIRVLNN…RLLEGEECRM (314 aa). The interval 141–159 is linker 1; it reads QQQGLSDRPQGLESFFEAY. A coil 1B region spans residues 160–252; the sequence is LVRLRTQLEE…LYEEELGQLQ (93 aa). A linker 12 region spans residues 253-275; that stretch reads TQASDMSVVLSMDNNRCLDFRDL. Residues 276 to 415 form a coil 2 region; the sequence is IAEVRARYEE…TYRRLLEGEE (140 aa). The segment at 416–528 is tail; that stretch reads CRMSGECASQ…ESSLKTSVTY (113 aa).

The protein belongs to the intermediate filament family. As to quaternary structure, heterotetramer of two type I and two type II keratins.

The sequence is that of Keratin, type II cytoskeletal 78 (KRT78) from Bos taurus (Bovine).